The sequence spans 660 residues: Peroxisomal acyl-coenzyme A oxidase 1 (660 aa).

The residue at position 26 (serine 26) is a Phosphoserine. Residues lysine 89 and lysine 90 each carry the N6-succinyllysine modification. FAD is bound by residues threonine 139 and glycine 178. N6-acetyllysine is present on lysine 216. Lysine 241 carries the post-translational modification N6-succinyllysine. N6-acetyllysine is present on residues lysine 255, lysine 267, and lysine 272. Position 349 is an N6-succinyllysine (lysine 349). The active-site Proton acceptor is glutamate 421. Lysine 437 and lysine 446 each carry N6-acetyllysine; alternate. N6-succinyllysine; alternate occurs at positions 437 and 446. N6-acetyllysine is present on residues lysine 500 and lysine 504. Position 512 is an N6-acetyllysine; alternate (lysine 512). Lysine 512 is modified (N6-succinyllysine; alternate). Lysine 542 bears the N6-succinyllysine mark. Lysine 637 is subject to N6-acetyllysine; alternate. Position 637 is an N6-succinyllysine; alternate (lysine 637). At lysine 643 the chain carries N6-succinyllysine. Residue serine 649 is modified to Phosphoserine. Lysine 651 carries the N6-acetyllysine modification. An N6-succinyllysine modification is found at lysine 654. Residues 658-660 carry the Microbody targeting signal motif; that stretch reads SKL.

The protein belongs to the acyl-CoA oxidase family. Homodimer. Interacts with LONP2. FAD serves as cofactor. In terms of tissue distribution, widely expressed with highest levels of isoform 1 and isoform 2 detected in testis. Isoform 1 is expressed at higher levels than isoform 2 in liver and kidney while isoform 2 levels are higher in brain, lung, muscle, white adipose tissue and testis. Levels are almost equal in heart.

It is found in the peroxisome. The enzyme catalyses a 2,3-saturated acyl-CoA + O2 = a (2E)-enoyl-CoA + H2O2. It catalyses the reaction hexadecanoyl-CoA + O2 = (2E)-hexadecenoyl-CoA + H2O2. It carries out the reaction dodecanoyl-CoA + O2 = (2E)-dodecenoyl-CoA + H2O2. The catalysed reaction is octanoyl-CoA + O2 = (2E)-octenoyl-CoA + H2O2. The enzyme catalyses decanoyl-CoA + O2 = (2E)-decenoyl-CoA + H2O2. It catalyses the reaction tetradecanoyl-CoA + O2 = (2E)-tetradecenoyl-CoA + H2O2. It carries out the reaction hexadecanedioyl-CoA + O2 = (2E)-hexadecenedioyl-CoA + H2O2. The catalysed reaction is (5Z,8Z,11Z,14Z,17Z)-eicosapentaenoyl-CoA + O2 = (2E,5Z,8Z,11Z,14Z,17Z)-icosahexaenoyl-CoA + H2O2. The enzyme catalyses tetracosanoyl-CoA + O2 = (2E)-tetracosenoyl-CoA + H2O2. It catalyses the reaction glutaryl-CoA + O2 = (2E)-glutaconyl-CoA + H2O2. It carries out the reaction hexanoyl-CoA + O2 = (2E)-hexenoyl-CoA + H2O2. The catalysed reaction is octadecanoyl-CoA + O2 = (2E)-octadecenoyl-CoA + H2O2. The enzyme catalyses (6Z,9Z,12Z,15Z,18Z,21Z)-tetracosahexaenoyl-CoA + O2 = (2E,6Z,9Z,12Z,15Z,18Z,21Z)-tetracosaheptaenoyl-CoA + H2O2. It participates in lipid metabolism; peroxisomal fatty acid beta-oxidation. Its function is as follows. Involved in the initial and rate-limiting step of peroxisomal beta-oxidation of straight-chain saturated and unsaturated very-long-chain fatty acids. Catalyzes the desaturation of fatty acyl-CoAs such as palmitoyl-CoA (hexadecanoyl-CoA) to 2-trans-enoyl-CoAs ((2E)-enoyl-CoAs) such as (2E)-hexadecenoyl-CoA, and donates electrons directly to molecular oxygen (O(2)), thereby producing hydrogen peroxide (H(2)O(2)). In terms of biological role, shows highest activity against medium-chain fatty acyl-CoAs. Shows optimum activity with a chain length of 10 carbons (decanoyl-CoA) in vitro. Functionally, is active against a much broader range of substrates and shows activity towards long-chain fatty acyl-CoAs. The protein is Peroxisomal acyl-coenzyme A oxidase 1 of Homo sapiens (Human).